Here is a 360-residue protein sequence, read N- to C-terminus: Diacylglycerol O-acyltransferase 3 (360 aa).

The tract at residues 153 to 182 (KAKAMKKMTEMDSESSSSSESSDSDCDKGK) is disordered. [2Fe-2S] cluster is bound by residues C265, C270, C298, and C302.

Belongs to the diacylglycerol acyltransferase family. Requires [2Fe-2S] cluster as cofactor.

The catalysed reaction is an acyl-CoA + a 1,2-diacyl-sn-glycerol = a triacyl-sn-glycerol + CoA. The protein operates within glycerolipid metabolism; triacylglycerol biosynthesis. Functionally, involved in triacylglycerol (TAG) biosynthesis. Catalyzes the acylation of the sn-3 hydroxy group of sn-1,2-diacylglycerol using acyl-CoA. May preferentially use linolenoyl-CoA as substrate and to a lesser extent linoleoyl-CoA. May contribute to the active recycling of linoleate and linolenate into TAG when seed oil breakdown is blocked. The polypeptide is Diacylglycerol O-acyltransferase 3 (Arabidopsis thaliana (Mouse-ear cress)).